We begin with the raw amino-acid sequence, 244 residues long: NAD-dependent protein deacetylase (244 aa).

One can recognise a Deacetylase sirtuin-type domain in the interval 1 to 244; the sequence is MDDKINKLKE…IGKVLGKVID (244 aa). Positions 24, 28, 35, 36, 105, 107, 108, and 123 each coordinate NAD(+). Phe35 is a binding site for nicotinamide. Residues Ile107 and Asp108 each coordinate nicotinamide. The active-site Proton acceptor is His123. Positions 131, 134, 152, and 155 each coordinate Zn(2+). Positions 193, 194, 217, and 235 each coordinate NAD(+).

The protein belongs to the sirtuin family. Class U subfamily. It depends on Zn(2+) as a cofactor.

The protein localises to the cytoplasm. It catalyses the reaction N(6)-acetyl-L-lysyl-[protein] + NAD(+) + H2O = 2''-O-acetyl-ADP-D-ribose + nicotinamide + L-lysyl-[protein]. Its function is as follows. NAD-dependent protein deacetylase which modulates the activities of several enzymes which are inactive in their acetylated form. This is NAD-dependent protein deacetylase from Clostridium perfringens (strain 13 / Type A).